Consider the following 511-residue polypeptide: Histidine ammonia-lyase (511 aa).

Residues Ala142–Gly144 constitute a cross-link (5-imidazolinone (Ala-Gly)). Residue Ser143 is modified to 2,3-didehydroalanine (Ser).

This sequence belongs to the PAL/histidase family. Post-translationally, contains an active site 4-methylidene-imidazol-5-one (MIO), which is formed autocatalytically by cyclization and dehydration of residues Ala-Ser-Gly.

It localises to the cytoplasm. It catalyses the reaction L-histidine = trans-urocanate + NH4(+). It participates in amino-acid degradation; L-histidine degradation into L-glutamate; N-formimidoyl-L-glutamate from L-histidine: step 1/3. This is Histidine ammonia-lyase from Rhizobium rhizogenes (Agrobacterium rhizogenes).